Here is a 259-residue protein sequence, read N- to C-terminus: Oxidase ustYb (259 aa).

The chain crosses the membrane as a helical span at residues 36-56 (IIYTSLAFVGFIEILFFGIFF). 2 N-linked (GlcNAc...) asparagine glycosylation sites follow: Asn102 and Asn122. 2 consecutive short sequence motifs (HXXHC) follow at residues 147 to 151 (HQLHC) and 197 to 201 (HVDHC).

Belongs to the ustYa family.

The protein localises to the membrane. It participates in mycotoxin biosynthesis. In terms of biological role, oxidase; part of the gene cluster that mediates the biosynthesis of the secondary metabolite ustiloxin B, an antimitotic tetrapeptide. First, ustA is processed by the subtilisin-like endoprotease Kex2 that is outside the ustiloxin B gene cluster, at the C-terminal side of Arg-Lys, after transfer to Golgi apparatus through the endoplasmic reticulum (ER). Cleavage by KEX2 generates 16 peptides YAIG-I to YAIG-XVI. To process the precursor peptide further, at least two peptidases are necessary to cleave the N-terminal and C-terminal sides of the Tyr-Ala-Ile-Gly core peptide which serves as backbone for the synthesis of ustiloxin B, through cyclization and modification of the tyrosine with a non-protein coding amino acid, norvaline. One of the two peptidases must be the serine peptidase ustP; and the other pepdidase is probably ustH. Macrocyclization of the core peptide derived from ustA requires the tyrosinase ustQ, as well as the homologous oxidases ustYa and ustYb, and leads to the production of the first cyclization product N-desmethylustiloxin F. For the formation of N-desmethylustiloxin F, three oxidation steps are required, hydroxylation at the benzylic position, hydroxylation at either the aromatic ring of Tyr or beta-position of Ile, and oxidative cyclization. UstQ may catalyze the oxidation of a phenol moiety, whereas the ustYa and ustYb are most likely responsible for the remaining two-step oxidations. N-desmethylustiloxin F is then methylated by ustM to yield ustiloxin F which in turn substrate of the cytochrome P450 monooxygenase ustC which catalyzes the formation of S-deoxyustiloxin H. The flavoprotein monooxygenases ustF1 and ustF2 then participate in the modification of the side chain of S-deoxyustiloxin H, leading to the synthesis of an oxime intermediate, via ustiloxin H. Finally, carboxylative dehydration performed by the cysteine desulfurase-like protein ustD yields ustiloxin B. This chain is Oxidase ustYb, found in Aspergillus flavus (strain ATCC 200026 / FGSC A1120 / IAM 13836 / NRRL 3357 / JCM 12722 / SRRC 167).